Here is a 298-residue protein sequence, read N- to C-terminus: L-xylulose reductase (298 aa).

NADP(+)-binding residues include Ile19, Asp68, and Asn103. Residues Ser161, Ser162, and Tyr175 each act as proton donor in the active site. Tyr175, Lys179, and Val207 together coordinate NADP(+). The active-site Lowers pKa of active site Tyr is Lys179.

The protein belongs to the short-chain dehydrogenases/reductases (SDR) family.

The enzyme catalyses xylitol + NADP(+) = L-xylulose + NADPH + H(+). The protein operates within carbohydrate degradation; L-arabinose degradation via L-arabinitol; D-xylulose 5-phosphate from L-arabinose (fungal route): step 3/5. Functionally, L-xylulose reductase involved in the catabolism of L-arabinose through an oxidoreductive pathway. Catalyzes the NADPH-dependent reduction of L-xylulose. This Aspergillus niger (strain ATCC 1015 / CBS 113.46 / FGSC A1144 / LSHB Ac4 / NCTC 3858a / NRRL 328 / USDA 3528.7) protein is L-xylulose reductase.